The following is an 87-amino-acid chain: Toxin CngtIII (87 aa).

The N-terminal stretch at 1–19 (MNSLLMITACLVLFGTVWA) is a signal peptide. The region spanning 20–85 (KEGYLVNKST…TYPLPNKTCS (66 aa)) is the LCN-type CS-alpha/beta domain. 4 disulfides stabilise this stretch: Cys31–Cys84, Cys35–Cys60, Cys44–Cys65, and Cys48–Cys67.

It belongs to the long (4 C-C) scorpion toxin superfamily. Sodium channel inhibitor family. Beta subfamily. In terms of tissue distribution, expressed by the venom gland.

The protein localises to the secreted. Functionally, beta toxins bind voltage-independently at site-4 of sodium channels (Nav) and shift the voltage of activation toward more negative potentials thereby affecting sodium channel activation and promoting spontaneous and repetitive firing. The sequence is that of Toxin CngtIII from Centruroides noxius (Mexican scorpion).